The primary structure comprises 149 residues: Sperm surface protein Sp17 (149 aa).

Residues 83-96 (CEQELAKSSGREET) show a composition bias toward basic and acidic residues. Positions 83–114 (CEQELAKSSGREETPVTPFEESTEEEREQEEA) are disordered. Over residues 103–113 (ESTEEEREQEE) the composition is skewed to acidic residues. The 30-residue stretch at 112–141 (EEAAALKIQSLFRGHVAREEVKKMKSDKNE) folds into the IQ domain.

In terms of assembly, homodimer. May interact with ROPN1. Testis- and sperm-specific.

The protein localises to the membrane. Its function is as follows. Sperm surface zona pellucida binding protein. Helps to bind spermatozoa to the zona pellucida with high affinity. Might function in binding zona pellucida and carbohydrates. The sequence is that of Sperm surface protein Sp17 (Spa17) from Mus musculus (Mouse).